Reading from the N-terminus, the 131-residue chain is Methylglyoxal synthase (131 aa).

Residues 1-131 (MKIALIAHDK…GDLDYRKLRK (131 aa)) enclose the MGS-like domain. Substrate is bound by residues His8, Lys12, 34–37 (TGTT), and 54–55 (SG). Asp60 acts as the Proton donor/acceptor in catalysis. His87 is a substrate binding site.

It belongs to the methylglyoxal synthase family.

It carries out the reaction dihydroxyacetone phosphate = methylglyoxal + phosphate. In terms of biological role, catalyzes the formation of methylglyoxal from dihydroxyacetone phosphate. The chain is Methylglyoxal synthase from Bacillus cereus (strain AH820).